The following is a 424-amino-acid chain: Interferon regulatory factor 8 (424 aa).

Residues 7 to 114 (GRRLRQWLIE…EPYKVYRIVP (108 aa)) constitute a DNA-binding region (IRF tryptophan pentad repeat).

It belongs to the IRF family. As to quaternary structure, interacts with COPS2. Interacts (via C-terminus) with TRIM21 (via C-terminus). Interacts with the BATF-JUNB heterodimer. Interacts with BATF (via bZIP domain); the interaction is direct. Interacts with SPI1. Ubiquitinated. Ubiquitination by TRIM21 in macrophages, a process that is strongly increased upon interferon gamma stimulation, leds to the enhanced transcriptional activity of target cytokine genes. Ubiquitination leads to its degradation by the proteasome. Post-translationally, sumoylated with SUMO3. Desumoylated by SENP1. In terms of tissue distribution, expressed in bone marrow macrophages (at protein level). Mainly expressed in lymphoid tissues. Predominantly expressed in CD8(+)-expressing dendritic cells.

It is found in the nucleus. It localises to the cytoplasm. Transcription factor that specifically binds to the upstream regulatory region of type I interferon (IFN) and IFN-inducible MHC class I genes (the interferon consensus sequence (ICS)). Can both act as a transcriptional activator or repressor. Plays a negative regulatory role in cells of the immune system. Involved in CD8(+) dendritic cell differentiation by forming a complex with the BATF-JUNB heterodimer in immune cells, leading to recognition of AICE sequence (5'-TGAnTCA/GAAA-3'), an immune-specific regulatory element, followed by cooperative binding of BATF and IRF8 and activation of genes. Required for the development of plasmacytoid dendritic cells (pDCs), which produce most of the type I IFN in response to viral infection. Positively regulates macroautophagy in dendritic cells. Acts as a transcriptional repressor of osteoclast differentiation factors such as NFATC1 and EEIG1. This chain is Interferon regulatory factor 8, found in Mus musculus (Mouse).